A 196-amino-acid chain; its full sequence is Large ribosomal subunit protein eL15 (196 aa).

Positions 155–196 are disordered; sequence THRGRAERGLTSAGKKGRGQRRKGKGTEKNYPSVQAHDRRGK. The segment covering 169 to 178 has biased composition (basic residues); the sequence is KKGRGQRRKG.

Belongs to the eukaryotic ribosomal protein eL15 family.

The polypeptide is Large ribosomal subunit protein eL15 (Methanocella arvoryzae (strain DSM 22066 / NBRC 105507 / MRE50)).